Here is a 475-residue protein sequence, read N- to C-terminus: Phenolic acid decarboxylase (475 aa).

Mn(2+)-binding residues include N161, H183, and E225. Prenylated FMN-binding positions include 161 to 166 (NVGIYR) and 182 to 183 (MH). Catalysis depends on E274, which acts as the Proton donor.

It belongs to the UbiD family. YclC subfamily. The cofactor is prenylated FMN. It depends on Mn(2+) as a cofactor.

The enzyme catalyses 4-hydroxybenzoate + H(+) = phenol + CO2. It carries out the reaction vanillate + H(+) = guaiacol + CO2. Functionally, involved in the non-oxidative decarboxylation and detoxification of phenolic derivatives under both aerobic and anaerobic conditions. Phenolic acid decarboxylase that catalyzes the reversible decarboxylation of 4-hydroxybenzoate and vanillate. In Escherichia coli O157:H7, this protein is Phenolic acid decarboxylase.